The chain runs to 417 residues: Solute carrier family 25 member 46-A (417 aa).

Residues 1–13 show a composition bias toward basic and acidic residues; the sequence is MQPRRPDRFDGLE. Positions 1-90 are disordered; that stretch reads MQPRRPDRFD…AFGEENSNSA (90 aa). Over residues 31–41 the composition is skewed to low complexity; the sequence is SSFPARSFSSS. A Solcar 1 repeat occupies 95–186; it reads QLNRFAGFGI…GILSEFTHLP (92 aa). 6 consecutive transmembrane segments (helical) span residues 102 to 122, 162 to 182, 198 to 218, 257 to 277, 313 to 333, and 382 to 402; these read FGIG…CIVL, MGST…LSEF, IGGH…FYSA, LLPL…HYIV, FPEL…LYPL, and LGFY…AIVL. The stretch at 310-415 is one Solcar 2 repeat; sequence EDYFPELIAN…KIIYSSVVQT (106 aa).

Belongs to the mitochondrial carrier (TC 2.A.29) family.

Its subcellular location is the mitochondrion outer membrane. May play a role in mitochondrial dynamics by controlling mitochondrial membrane fission. In Xenopus laevis (African clawed frog), this protein is Solute carrier family 25 member 46-A (slc25a46-a).